The chain runs to 526 residues: Rho guanine nucleotide exchange factor 3 (526 aa).

The segment at 20-40 (ELPPASGPAKDAEEPSNKRVK) is disordered. Phosphoserine occurs at positions 47 and 70. A DH domain is found at 122–304 (KRQEAIFELS…QGIVAEINTK (183 aa)). The region spanning 291 to 449 (INIIQGIVAE…WLNCIRQAKE (159 aa)) is the PH domain. Residues 464–526 (EGSFLNPTTG…GNSRHGESNV (63 aa)) form a disordered region. Residues 466–475 (SFLNPTTGSR) show a composition bias toward polar residues.

Interacts with RHOA and RHOB.

It is found in the cytoplasm. Its function is as follows. Acts as a guanine nucleotide exchange factor (GEF) for RhoA and RhoB GTPases. This is Rho guanine nucleotide exchange factor 3 (ARHGEF3) from Pongo abelii (Sumatran orangutan).